Reading from the N-terminus, the 224-residue chain is Uridylate kinase (224 aa).

9-10 lines the ATP pocket; it reads GS. Glycine 43 lines the UMP pocket. Positions 44 and 48 each coordinate ATP. UMP is bound by residues aspartate 65 and 113–119; that span reads TEPAHST. Positions 139, 145, and 148 each coordinate ATP.

It belongs to the UMP kinase family. As to quaternary structure, homohexamer.

The protein resides in the cytoplasm. The enzyme catalyses UMP + ATP = UDP + ADP. Its pathway is pyrimidine metabolism; CTP biosynthesis via de novo pathway; UDP from UMP (UMPK route): step 1/1. With respect to regulation, inhibited by UTP. Its function is as follows. Catalyzes the reversible phosphorylation of UMP to UDP. In Methanothermobacter thermautotrophicus (strain ATCC 29096 / DSM 1053 / JCM 10044 / NBRC 100330 / Delta H) (Methanobacterium thermoautotrophicum), this protein is Uridylate kinase.